Reading from the N-terminus, the 98-residue chain is Acylphosphatase (98 aa).

In terms of domain architecture, Acylphosphatase-like spans 12 to 98 (TYYVRVRGVV…DKRFERFQQH (87 aa)). Catalysis depends on residues arginine 27 and asparagine 45.

It belongs to the acylphosphatase family.

The enzyme catalyses an acyl phosphate + H2O = a carboxylate + phosphate + H(+). The polypeptide is Acylphosphatase (acyP) (Burkholderia mallei (strain NCTC 10247)).